A 583-amino-acid polypeptide reads, in one-letter code: Membrane protein insertase YidC (583 aa).

6 consecutive transmembrane segments (helical) span residues 5 to 25, 341 to 361, 362 to 382, 427 to 447, 473 to 493, and 520 to 540; these read SVTG…FMSP, PFAE…VSNY, GLII…LSMA, IGGC…FYVF, FGFA…LMAV, and AMML…YLMF.

The protein belongs to the OXA1/ALB3/YidC family. Type 1 subfamily. Interacts with the Sec translocase complex via SecD. Specifically interacts with transmembrane segments of nascent integral membrane proteins during membrane integration.

The protein localises to the cell inner membrane. Its function is as follows. Required for the insertion and/or proper folding and/or complex formation of integral membrane proteins into the membrane. Involved in integration of membrane proteins that insert both dependently and independently of the Sec translocase complex, as well as at least some lipoproteins. Aids folding of multispanning membrane proteins. This is Membrane protein insertase YidC from Pelodictyon phaeoclathratiforme (strain DSM 5477 / BU-1).